Here is a 425-residue protein sequence, read N- to C-terminus: CAAX prenyl protease 1 homolog (425 aa).

5 helical membrane passes run 3–23 (LPYLEAVLCFMILMYIFETYL), 62–80 (FHFIHEAVTILMDTTILYY), 109–129 (LAFLAGVMIWSQITDLPFSLY), 155–175 (GILLSILLGPPIVAAIIIIVQ), and 188–208 (FMFALSLVMMTIYPIVIAPLF). Residue histidine 284 coordinates Zn(2+). Glutamate 285 is a catalytic residue. Histidine 288 lines the Zn(2+) pocket. 2 consecutive transmembrane segments (helical) span residues 295 to 315 (VYSFVAVQLLMFLQFGGYTLV) and 332 to 352 (VIIGLIIFQHTIIPVQHLLSF). Glutamate 362 contacts Zn(2+). Aspartate 366 functions as the Proton donor in the catalytic mechanism.

This sequence belongs to the peptidase M48A family. Zn(2+) is required as a cofactor.

The protein resides in the endoplasmic reticulum membrane. It carries out the reaction Hydrolyzes the peptide bond -P2-(S-farnesyl or geranylgeranyl)C-P1'-P2'-P3'-COOH where P1' and P2' are amino acids with aliphatic side chains and P3' is any C-terminal residue.. Functionally, proteolytically removes the C-terminal three residues of farnesylated proteins. The chain is CAAX prenyl protease 1 homolog (FACE1) from Oryza sativa subsp. japonica (Rice).